The primary structure comprises 193 residues: Acyl carrier protein phosphodiesterase (193 aa).

This sequence belongs to the AcpH family.

The catalysed reaction is holo-[ACP] + H2O = apo-[ACP] + (R)-4'-phosphopantetheine + H(+). Functionally, converts holo-ACP to apo-ACP by hydrolytic cleavage of the phosphopantetheine prosthetic group from ACP. The polypeptide is Acyl carrier protein phosphodiesterase (Salmonella paratyphi A (strain ATCC 9150 / SARB42)).